The primary structure comprises 133 residues: Snaclec botrocetin subunit alpha (133 aa).

Cystine bridges form between C2/C13, C30/C128, and C103/C120. The C-type lectin domain maps to Y9–K129.

It belongs to the snaclec family. Heterodimer of subunits alpha and beta; disulfide-linked. Botrocetin and vWF form a soluble complex. As to expression, expressed by the venom gland.

The protein localises to the secreted. Functionally, snaclec that binds to von Willebrand factor (VWF) and induces its interaction with GPIbalpha (GP1BA) (via the vWF A1 domain), resulting in platelet aggregation. The chain is Snaclec botrocetin subunit alpha from Bothrops jararaca (Jararaca).